The sequence spans 117 residues: Large ribosomal subunit protein uL18 (117 aa).

Belongs to the universal ribosomal protein uL18 family. As to quaternary structure, part of the 50S ribosomal subunit; part of the 5S rRNA/L5/L18/L25 subcomplex. Contacts the 5S and 23S rRNAs.

This is one of the proteins that bind and probably mediate the attachment of the 5S RNA into the large ribosomal subunit, where it forms part of the central protuberance. In Glaesserella parasuis serovar 5 (strain SH0165) (Haemophilus parasuis), this protein is Large ribosomal subunit protein uL18.